A 411-amino-acid polypeptide reads, in one-letter code: Serine hydroxymethyltransferase (411 aa).

Gly120–Leu122 is a binding site for (6S)-5,6,7,8-tetrahydrofolate. Lys225 carries the post-translational modification N6-(pyridoxal phosphate)lysine. Residues Glu241 and Ser350–Phe352 contribute to the (6S)-5,6,7,8-tetrahydrofolate site.

Belongs to the SHMT family. Homodimer. The cofactor is pyridoxal 5'-phosphate.

It is found in the cytoplasm. The catalysed reaction is (6R)-5,10-methylene-5,6,7,8-tetrahydrofolate + glycine + H2O = (6S)-5,6,7,8-tetrahydrofolate + L-serine. Its pathway is one-carbon metabolism; tetrahydrofolate interconversion. It functions in the pathway amino-acid biosynthesis; glycine biosynthesis; glycine from L-serine: step 1/1. Its function is as follows. Catalyzes the reversible interconversion of serine and glycine with tetrahydrofolate (THF) serving as the one-carbon carrier. This reaction serves as the major source of one-carbon groups required for the biosynthesis of purines, thymidylate, methionine, and other important biomolecules. Also exhibits THF-independent aldolase activity toward beta-hydroxyamino acids, producing glycine and aldehydes, via a retro-aldol mechanism. This Limosilactobacillus fermentum (strain NBRC 3956 / LMG 18251) (Lactobacillus fermentum) protein is Serine hydroxymethyltransferase.